The chain runs to 249 residues: Proteasome activator complex subunit 1 (249 aa).

The interval Pro-60–Gly-102 is disordered. The segment covering Pro-68–Gly-98 has biased composition (basic and acidic residues).

The protein belongs to the PA28 family. In terms of assembly, heterodimer of PSME1 and PSME2, which forms a hexameric ring. PSME1 can form homoheptamers.

Implicated in immunoproteasome assembly and required for efficient antigen processing. The PA28 activator complex enhances the generation of class I binding peptides by altering the cleavage pattern of the proteasome. This chain is Proteasome activator complex subunit 1 (Psme1), found in Rattus norvegicus (Rat).